The chain runs to 98 residues: Large ribosomal subunit protein uL23 (98 aa).

This sequence belongs to the universal ribosomal protein uL23 family. In terms of assembly, part of the 50S ribosomal subunit. Contacts protein L29, and trigger factor when it is bound to the ribosome.

Its function is as follows. One of the early assembly proteins it binds 23S rRNA. One of the proteins that surrounds the polypeptide exit tunnel on the outside of the ribosome. Forms the main docking site for trigger factor binding to the ribosome. The protein is Large ribosomal subunit protein uL23 of Streptococcus gordonii (strain Challis / ATCC 35105 / BCRC 15272 / CH1 / DL1 / V288).